The sequence spans 148 residues: Large ribosomal subunit protein bL9 (148 aa).

It belongs to the bacterial ribosomal protein bL9 family.

In terms of biological role, binds to the 23S rRNA. The polypeptide is Large ribosomal subunit protein bL9 (Macrococcus caseolyticus (strain JCSC5402) (Macrococcoides caseolyticum)).